The following is an 874-amino-acid chain: Alanine--tRNA ligase (874 aa).

Residues H564, H568, C666, and H670 each contribute to the Zn(2+) site.

Belongs to the class-II aminoacyl-tRNA synthetase family. The cofactor is Zn(2+).

Its subcellular location is the cytoplasm. The enzyme catalyses tRNA(Ala) + L-alanine + ATP = L-alanyl-tRNA(Ala) + AMP + diphosphate. Catalyzes the attachment of alanine to tRNA(Ala) in a two-step reaction: alanine is first activated by ATP to form Ala-AMP and then transferred to the acceptor end of tRNA(Ala). Also edits incorrectly charged Ser-tRNA(Ala) and Gly-tRNA(Ala) via its editing domain. The polypeptide is Alanine--tRNA ligase (Carboxydothermus hydrogenoformans (strain ATCC BAA-161 / DSM 6008 / Z-2901)).